The sequence spans 736 residues: Melanotransferrin (736 aa).

Residues 1-19 form the signal peptide; it reads MRCRSAAMWIFLALRTALG. Transferrin-like domains are found at residues 23 to 357 and 366 to 706; these read VRWC…GLLC and LRWC…GMQS. 2 disulfides stabilise this stretch: cysteine 26/cysteine 63 and cysteine 36/cysteine 54. Residues aspartate 78 and tyrosine 107 each contribute to the Fe(3+) site. Asparagine 118 carries an N-linked (GlcNAc...) asparagine glycan. 4 disulfides stabilise this stretch: cysteine 130–cysteine 216, cysteine 172–cysteine 189, cysteine 186–cysteine 199, and cysteine 257–cysteine 271. Threonine 132 contributes to the hydrogencarbonate binding site. Asparagine 135 carries an N-linked (GlcNAc...) asparagine glycan. Hydrogencarbonate is bound by residues arginine 136, valine 138, and glycine 139. Tyrosine 210 serves as a coordination point for Fe(3+). Fe(3+) is bound by residues histidine 279 and tyrosine 451. Asparagine 515 carries N-linked (GlcNAc...) asparagine glycosylation. A Fe(3+)-binding site is contributed by histidine 625. Glycine 711 carries the GPI-anchor amidated glycine lipid modification. Positions 712-736 are cleaved as a propeptide — removed in mature form; the sequence is AAVGAPGASLLPLLPLAVGLLLSSL.

This sequence belongs to the transferrin family.

It is found in the cell membrane. Functionally, involved in iron cellular uptake. Seems to be internalized and then recycled back to the cell membrane. Binds a single atom of iron per subunit. Could also bind zinc. This is Melanotransferrin from Oryctolagus cuniculus (Rabbit).